Consider the following 804-residue polypeptide: Exocyst complex component 6 (804 aa).

The protein belongs to the SEC15 family. In terms of assembly, the exocyst complex is composed of EXOC1, EXOC2, EXOC3, EXOC4, EXOC5, EXOC6, EXOC7 and EXOC8. Interacts with CNTRL. Interacts with RAB11A in a GTP-dependent manner.

Its subcellular location is the cytoplasm. The protein resides in the perinuclear region. It is found in the cell projection. The protein localises to the growth cone. It localises to the midbody. Its subcellular location is the midbody ring. Functionally, component of the exocyst complex involved in the docking of exocytic vesicles with fusion sites on the plasma membrane. Together with RAB11A, RAB3IP, RAB8A, PARD3, PRKCI, ANXA2, CDC42 and DNMBP promotes transcytosis of PODXL to the apical membrane initiation sites (AMIS), apical surface formation and lumenogenesis. In Rattus norvegicus (Rat), this protein is Exocyst complex component 6 (Exoc6).